We begin with the raw amino-acid sequence, 378 residues long: Ribosomal RNA large subunit methyltransferase G (378 aa).

The protein belongs to the methyltransferase superfamily. RlmG family.

The protein resides in the cytoplasm. It catalyses the reaction guanosine(1835) in 23S rRNA + S-adenosyl-L-methionine = N(2)-methylguanosine(1835) in 23S rRNA + S-adenosyl-L-homocysteine + H(+). Functionally, specifically methylates the guanine in position 1835 (m2G1835) of 23S rRNA. This Shigella flexneri protein is Ribosomal RNA large subunit methyltransferase G.